The chain runs to 674 residues: Translation factor GUF1, mitochondrial (674 aa).

Residues 1–48 constitute a mitochondrion transit peptide; it reads MRGCLQPARWLTTATLRRPLLSCPRQLPTRYNPFPRPFHHAPVLQARQ. The region spanning 66–246 is the tr-type G domain; that stretch reads ERYRNFCIVA…AIIESIPALL (181 aa). Residues 75–82, 139–143, and 193–196 contribute to the GTP site; these read AHVDHGKS, DTPGH, and NKVD.

This sequence belongs to the TRAFAC class translation factor GTPase superfamily. Classic translation factor GTPase family. LepA subfamily.

Its subcellular location is the mitochondrion inner membrane. It catalyses the reaction GTP + H2O = GDP + phosphate + H(+). In terms of biological role, promotes mitochondrial protein synthesis. May act as a fidelity factor of the translation reaction, by catalyzing a one-codon backward translocation of tRNAs on improperly translocated ribosomes. Binds to mitochondrial ribosomes in a GTP-dependent manner. The polypeptide is Translation factor GUF1, mitochondrial (Arthroderma otae (strain ATCC MYA-4605 / CBS 113480) (Microsporum canis)).